We begin with the raw amino-acid sequence, 196 residues long: Small ribosomal subunit protein uS5 (196 aa).

Positions 17–80 constitute an S5 DRBM domain; sequence FEEKMLFVNR…AVARKNMITV (64 aa). Positions 164–196 are disordered; that stretch reads GTEVRPSLSSDSPAGRSATTEAGEGVADTGGMQ. Positions 170–183 are enriched in polar residues; it reads SLSSDSPAGRSATT.

Belongs to the universal ribosomal protein uS5 family. As to quaternary structure, part of the 30S ribosomal subunit. Contacts proteins S4 and S8.

In terms of biological role, with S4 and S12 plays an important role in translational accuracy. Located at the back of the 30S subunit body where it stabilizes the conformation of the head with respect to the body. This Deinococcus radiodurans (strain ATCC 13939 / DSM 20539 / JCM 16871 / CCUG 27074 / LMG 4051 / NBRC 15346 / NCIMB 9279 / VKM B-1422 / R1) protein is Small ribosomal subunit protein uS5.